Consider the following 158-residue polypeptide: Immunoglobulin J chain (158 aa).

The signal sequence occupies residues 1–22 (MKNHLFFWGVLAIFVQAVLVTA). Cystine bridges form between cysteine 36–cysteine 122, cysteine 95–cysteine 115, and cysteine 130–cysteine 155. Asparagine 72 carries an N-linked (GlcNAc...) (complex) asparagine glycan.

As to quaternary structure, part of the secretory IgA (sIgA) complex that consists of two, four or five IgA monomers, and two additional non-Ig polypeptides, namely the JCHAIN and the secretory component (the proteolytic product of PIGR). Part of the secretory IgM (sIgM) complex that consist of five IgM monomers, and two additional non-Ig polypeptides, namely the JCHAIN and the secretory component (the proteolytic product of PIGR). JCHAIN-containing IgM interacts (via CH4 domain) with FCRM (via Ig-like domain). N-glycosylated. N-glycans attached to Asn-72 varies from truncated, differentially fucosylated to sialylated (NeuGc) complex types: Man3GlcNAc2; GlcNAc2Man3GlcNAc2(Fuc); Gal1GlcNAc1Man3GlcNAc2; GlcNAc2Man3GlcNAc2; GlcNAc1Man3GlcNAc2; GlcNAc1Man2GlcNAc2 and NeuGc1Gal1GlcNAc2Man3GlcNAc2.

The protein resides in the secreted. Its function is as follows. Serves to link two monomer units of either IgM or IgA. In the case of IgM, the J chain-joined dimer is a nucleating unit for the IgM pentamer, and in the case of IgA it induces dimers and/or larger polymers. It also helps to bind these immunoglobulins to secretory component. The protein is Immunoglobulin J chain (JCHAIN) of Equus asinus (Donkey).